The following is a 564-amino-acid chain: MHPDQADTAAMQQQTTTECSDRSRPEKAEEGHAREHTVTRTCSREPEQTATATKPTGLKLICLTTAICLTIFLISVDFSILATAIPAITAEFKSVADIGWYGSSYLLTTASSQLLLGKCYTVFDLKWTFLLALLTFEVGSIICATAPSSVVLIIGRAIAGCGNAGLLSGALLILTHSVPLEKRPLFMAMTGGTYGVAAIAGPPLGGVFTDKLSWRWCFWINLPIGALTFLVIVFLFKSPPRSGFDGSRSWLAKVMRFDPVGTLMFMPAIICVLLALQWGGTTHAWNSGIVVALLVVGGVLVIAFGIVQWLMHDDATIPLRIIKKRTIWACAAYQFALGAAFFVFIYFLPIWFQGVQGASAIQSGVRTLPMLVGNIVATAVSGVLVTIIGYYAPFMILGTILASVGAGLLLLFTPNVTAASWIGYQAIVGLGIGFGWQQPFVAVQTVLDIKDVPIATATLSFAQTLGGTLFVSVAQTAFSTKLTQELVSQVPQLDPASILHEGGAAELDKLVPEQYLPDVVLSYNNSLLSAFFVATIMAIMSLVGCTFVEWNSVKGKKADAVPAA.

Low complexity predominate over residues Met-1 to Thr-17. The tract at residues Met-1 to Thr-49 is disordered. Residues Cys-19–Glu-47 show a composition bias toward basic and acidic residues. A run of 10 helical transmembrane segments spans residues Ala-66–Pro-86, Trp-127–Pro-147, Ile-158–Val-178, Leu-185–Gly-205, Trp-216–Phe-236, Val-260–Gly-280, Ser-287–Val-307, Phe-335–Val-355, Leu-368–Ile-388, and Ala-392–Phe-412. N-linked (GlcNAc...) asparagine glycosylation occurs at Asn-415. A run of 2 helical transmembrane segments spans residues Val-416–Trp-436 and Ile-454–Ala-474. The N-linked (GlcNAc...) asparagine glycan is linked to Asn-524. The chain crosses the membrane as a helical span at residues Leu-528–Val-548.

This sequence belongs to the major facilitator superfamily. TCR/Tet family.

The protein localises to the cell membrane. Its function is as follows. Efflux pump that may be involved in the secretion of leporins. This Neocamarosporium betae (Beet black rot fungus) protein is Aspyridones efflux protein (TP).